An 85-amino-acid polypeptide reads, in one-letter code: MGLLDFLKSKKNTAETAKNRLQIIIAQERNHRGGPDYLPLMQRELLEVIKKYVNIDADAVRVDLVKDGEHDVLDISVALPEDGDK.

This sequence belongs to the MinE family.

Its function is as follows. Prevents the cell division inhibition by proteins MinC and MinD at internal division sites while permitting inhibition at polar sites. This ensures cell division at the proper site by restricting the formation of a division septum at the midpoint of the long axis of the cell. The chain is Cell division topological specificity factor from Xanthomonas euvesicatoria pv. vesicatoria (strain 85-10) (Xanthomonas campestris pv. vesicatoria).